Reading from the N-terminus, the 93-residue chain is Small ribosomal subunit protein uS19 (93 aa).

Belongs to the universal ribosomal protein uS19 family.

Functionally, protein S19 forms a complex with S13 that binds strongly to the 16S ribosomal RNA. In Oenococcus oeni (strain ATCC BAA-331 / PSU-1), this protein is Small ribosomal subunit protein uS19.